Consider the following 78-residue polypeptide: RNA-binding protein KhpA (78 aa).

The 50-residue stretch at 29–78 (TIIYELTVAKGDIGKIIGKEGRTIKAIRTLLVSVASRDNVKVSLEIMEER) folds into the KH domain.

The protein belongs to the KhpA RNA-binding protein family.

It localises to the cytoplasm. Functionally, a probable RNA-binding protein. The polypeptide is RNA-binding protein KhpA (Chlamydia trachomatis serovar D (strain ATCC VR-885 / DSM 19411 / UW-3/Cx)).